The chain runs to 465 residues: Cysteine--tRNA ligase (465 aa).

C30 serves as a coordination point for Zn(2+). The 'HIGH' region signature appears at 32–42 (PTVYDRAHLGN). Positions 213, 238, and 242 each coordinate Zn(2+). Residues 271 to 275 (KMSKS) carry the 'KMSKS' region motif. K274 is a binding site for ATP.

It belongs to the class-I aminoacyl-tRNA synthetase family. In terms of assembly, monomer. It depends on Zn(2+) as a cofactor.

It is found in the cytoplasm. The enzyme catalyses tRNA(Cys) + L-cysteine + ATP = L-cysteinyl-tRNA(Cys) + AMP + diphosphate. In Ruegeria pomeroyi (strain ATCC 700808 / DSM 15171 / DSS-3) (Silicibacter pomeroyi), this protein is Cysteine--tRNA ligase.